A 530-amino-acid chain; its full sequence is Protein P80 (530 aa).

Residues 1–22 (MKVISGLLFFILISCSLFLVQG) form the signal peptide. Residues 491 to 511 (MLVAMTFNVALFFAVIAGVLV) form a helical membrane-spanning segment.

The protein belongs to the SLC31A transporter family.

It is found in the late endosome membrane. This Dictyostelium discoideum (Social amoeba) protein is Protein P80 (p80).